We begin with the raw amino-acid sequence, 318 residues long: MSRNHRRIEMDLAVGSSSKHYGSSRSIVRRIATNLPLAPCPRVHFQLHPFASGASFLNSPNGPNVATLADVAWIDREESDGPGRIRCEADSGLVFRTQERRPLRRQRSLPSLHQVEPAQQSQTVINDEAIQKISVLETELAKLRAQIAQIVQAQEQSAQSTAPAPGGPPVPPPMVPVPPPPPPPPPCPTPSMQRSYSAIDLIRERRGKKAEQNTVLDSAPKKPELPNMLDVLKDMGKVKLRSVKSHQEDGNVKAKPVEPTDAAAMIAEALKRKFAHRYRNDSECDGTFTFTAFENKPHVETPLFGQHMLKSTGRRKMH.

Disordered stretches follow at residues 101 to 121 (RPLRRQRSLPSLHQVEPAQQS) and 154 to 193 (QEQSAQSTAPAPGGPPVPPPMVPVPPPPPPPPPCPTPSMQ). Residues 124–157 (VINDEAIQKISVLETELAKLRAQIAQIVQAQEQS) are a coiled coil. Positions 154–164 (QEQSAQSTAPA) are enriched in low complexity. Residues 165–189 (PGGPPVPPPMVPVPPPPPPPPPCPT) show a composition bias toward pro residues. The necessary and sufficient to promote mitochondrial fission stretch occupies residues 168–296 (PPVPPPMVPV…TFTFTAFENK (129 aa)).

It belongs to the MTFR1 family.

The protein resides in the mitochondrion. In terms of biological role, may play a role in mitochondrial aerobic respiration. May also regulate mitochondrial organization and fission. This Danio rerio (Zebrafish) protein is Mitochondrial fission regulator 1 (mtfr1).